A 1217-amino-acid polypeptide reads, in one-letter code: Splicing factor 3B subunit 3 (1217 aa).

Interaction with PHF5A, SF3B1 and SF3B5 regions lie at residues Glu-105 to Gln-119 and Asn-145 to Tyr-168. Ser-156 is modified (phosphoserine). 2 interaction with SF3B1 and SF3B5 regions span residues Asp-193 to His-231 and Arg-786 to His-804. Residues Thr-1028–Lys-1049 are interaction with SF3B1. Positions Thr-1100 to Ser-1123 are interaction with SF3B5. At Thr-1200 the chain carries Phosphothreonine.

It belongs to the RSE1 family. Component of the 17S U2 SnRNP complex, a ribonucleoprotein complex that contains small nuclear RNA (snRNA) U2 and a number of specific proteins. Part of the SF3B subcomplex of the 17S U2 SnRNP complex. SF3B associates with the splicing subcomplex SF3A and a 12S RNA unit to form the U2 small nuclear ribonucleoproteins complex (U2 snRNP). Within the SF3B subcomplex, interacts directly with SF3B1 (via HEAT domain), SF3B5 and PHF5A. Identified in the spliceosome A complex; remains associated with the spliceosome throughout the splicing process. Component of the spliceosome B complex. Identified in the spliceosome C complex. Identified in the spliceosome E complex. Component of the minor (U12-type spliceosome) spliceosome. Within this complex, interacts with SCNM1. Associates with the STAGA transcription coactivator-HAT complex. Interacts with SUPT3H. Interacts with TAF3.

The protein localises to the nucleus. Component of the 17S U2 SnRNP complex of the spliceosome, a large ribonucleoprotein complex that removes introns from transcribed pre-mRNAs. The 17S U2 SnRNP complex (1) directly participates in early spliceosome assembly and (2) mediates recognition of the intron branch site during pre-mRNA splicing by promoting the selection of the pre-mRNA branch-site adenosine, the nucleophile for the first step of splicing. Within the 17S U2 SnRNP complex, SF3B3 is part of the SF3B subcomplex, which is required for 'A' complex assembly formed by the stable binding of U2 snRNP to the branchpoint sequence in pre-mRNA. Sequence independent binding of SF3A and SF3B subcomplexes upstream of the branch site is essential, it may anchor U2 snRNP to the pre-mRNA. May also be involved in the assembly of the 'E' complex. Also acts as a component of the minor spliceosome, which is involved in the splicing of U12-type introns in pre-mRNAs. In Pongo abelii (Sumatran orangutan), this protein is Splicing factor 3B subunit 3 (SF3B3).